A 240-amino-acid chain; its full sequence is Flavin-dependent thymidylate synthase (240 aa).

One can recognise a ThyX domain in the interval 13 to 235; the sequence is ITVELVKHSA…PETHAAFEKQ (223 aa). Residues serine 64, 87-89, and glutamate 95 each bind FAD; that span reads RHR. DUMP contacts are provided by residues 84-87, 95-99, and arginine 167; these read EFMR and EESGR. Residues 87–97 carry the ThyX motif motif; it reads RHRIASYNEES. Residues 183-185 and asparagine 189 contribute to the FAD site; that span reads NAR. Residue arginine 194 coordinates dUMP. Arginine 194 acts as the Involved in ionization of N3 of dUMP, leading to its activation in catalysis.

This sequence belongs to the thymidylate synthase ThyX family. As to quaternary structure, homotetramer. Requires FAD as cofactor.

The catalysed reaction is dUMP + (6R)-5,10-methylene-5,6,7,8-tetrahydrofolate + NADPH + H(+) = dTMP + (6S)-5,6,7,8-tetrahydrofolate + NADP(+). It participates in pyrimidine metabolism; dTTP biosynthesis. In terms of biological role, catalyzes the reductive methylation of 2'-deoxyuridine-5'-monophosphate (dUMP) to 2'-deoxythymidine-5'-monophosphate (dTMP) while utilizing 5,10-methylenetetrahydrofolate (mTHF) as the methyl donor, and NADPH and FADH(2) as the reductant. The protein is Flavin-dependent thymidylate synthase of Tropheryma whipplei (strain TW08/27) (Whipple's bacillus).